Reading from the N-terminus, the 471-residue chain is Glycosyl hydrolase family 109 protein 1 (471 aa).

A signal peptide spans methionine 1 to serine 15. Cysteine 16 carries N-palmitoyl cysteine lipidation. Cysteine 16 carries S-diacylglycerol cysteine lipidation. NAD(+)-binding positions include methionine 70–arginine 71, aspartate 92, tryptophan 141–histidine 144, glutamate 161–valine 162, and asparagine 190. Residues tyrosine 219, arginine 235, tyrosine 247–histidine 250, and tyrosine 325 each bind substrate. Tyrosine 247 contacts NAD(+).

The protein belongs to the Gfo/Idh/MocA family. Glycosyl hydrolase 109 subfamily. Requires NAD(+) as cofactor.

It localises to the cell membrane. Functionally, glycosidase. This is Glycosyl hydrolase family 109 protein 1 from Phocaeicola vulgatus (strain ATCC 8482 / DSM 1447 / JCM 5826 / CCUG 4940 / NBRC 14291 / NCTC 11154) (Bacteroides vulgatus).